Reading from the N-terminus, the 426-residue chain is Enolase (426 aa).

Glutamine 163 is a binding site for (2R)-2-phosphoglycerate. Glutamate 205 serves as the catalytic Proton donor. Mg(2+) is bound by residues aspartate 242, glutamate 286, and aspartate 313. Lysine 338, arginine 367, serine 368, and lysine 389 together coordinate (2R)-2-phosphoglycerate. Catalysis depends on lysine 338, which acts as the Proton acceptor.

Belongs to the enolase family. Mg(2+) serves as cofactor.

It localises to the cytoplasm. Its subcellular location is the secreted. The protein resides in the cell surface. It catalyses the reaction (2R)-2-phosphoglycerate = phosphoenolpyruvate + H2O. It participates in carbohydrate degradation; glycolysis; pyruvate from D-glyceraldehyde 3-phosphate: step 4/5. Its function is as follows. Catalyzes the reversible conversion of 2-phosphoglycerate (2-PG) into phosphoenolpyruvate (PEP). It is essential for the degradation of carbohydrates via glycolysis. This chain is Enolase, found in Helicobacter pylori (strain P12).